We begin with the raw amino-acid sequence, 481 residues long: Glutamyl-tRNA(Gln) amidotransferase subunit A (481 aa).

Residues lysine 74 and serine 149 each act as charge relay system in the active site. Serine 173 functions as the Acyl-ester intermediate in the catalytic mechanism.

This sequence belongs to the amidase family. GatA subfamily. In terms of assembly, heterotrimer of A, B and C subunits.

The catalysed reaction is L-glutamyl-tRNA(Gln) + L-glutamine + ATP + H2O = L-glutaminyl-tRNA(Gln) + L-glutamate + ADP + phosphate + H(+). Functionally, allows the formation of correctly charged Gln-tRNA(Gln) through the transamidation of misacylated Glu-tRNA(Gln) in organisms which lack glutaminyl-tRNA synthetase. The reaction takes place in the presence of glutamine and ATP through an activated gamma-phospho-Glu-tRNA(Gln). This chain is Glutamyl-tRNA(Gln) amidotransferase subunit A, found in Francisella tularensis subsp. holarctica (strain FTNF002-00 / FTA).